A 199-amino-acid chain; its full sequence is Inactive glutathione S-transferase D3 (199 aa).

The GST N-terminal domain maps to 1-64; it reads MVGKALGLEF…YLVEKYGKDD (64 aa). Residues 34–36 and 48–50 contribute to the glutathione site; these read HSI and ESR. The region spanning 70-199 is the GST C-terminal domain; sequence DIQKQAVINQ…RIEEKQNAAK (130 aa).

This sequence belongs to the GST superfamily. Delta family. Homodimer.

Has no glutathione S-transferase activity. The polypeptide is Inactive glutathione S-transferase D3 (Drosophila melanogaster (Fruit fly)).